The chain runs to 432 residues: Adenylosuccinate synthetase (432 aa).

GTP-binding positions include 13–19 and 41–43; these read GDEGKGK and GHT. Asp14 acts as the Proton acceptor in catalysis. Mg(2+)-binding residues include Asp14 and Gly41. IMP contacts are provided by residues 14–17, 39–42, Thr131, Arg145, Gln226, Thr241, and Arg305; these read DEGK and NAGH. His42 serves as the catalytic Proton donor. 301–307 is a binding site for substrate; the sequence is SVTGRAR. GTP contacts are provided by residues Arg307, 333–335, and 416–418; these read KLD and STG.

This sequence belongs to the adenylosuccinate synthetase family. In terms of assembly, homodimer. Requires Mg(2+) as cofactor.

The protein resides in the cytoplasm. It catalyses the reaction IMP + L-aspartate + GTP = N(6)-(1,2-dicarboxyethyl)-AMP + GDP + phosphate + 2 H(+). Its pathway is purine metabolism; AMP biosynthesis via de novo pathway; AMP from IMP: step 1/2. Functionally, plays an important role in the de novo pathway of purine nucleotide biosynthesis. Catalyzes the first committed step in the biosynthesis of AMP from IMP. The sequence is that of Adenylosuccinate synthetase from Neisseria meningitidis serogroup C (strain 053442).